The sequence spans 389 residues: Leucine aminopeptidase 1 (389 aa).

The first 18 residues, 1–18 (MKSAALLLPLYTAAFAAA), serve as a signal peptide directing secretion. A propeptide spanning residues 19–89 (AFHHEHAQAV…TLNHRINAES (71 aa)) is cleaved from the precursor. N-linked (GlcNAc...) asparagine glycans are attached at residues N99, N146, and N156. H188, D207, E246, and D273 together coordinate Zn(2+). C322 and C326 form a disulfide bridge. Zn(2+) is bound at residue H355.

Belongs to the peptidase M28 family. M28E subfamily. Monomer. Requires Zn(2+) as cofactor.

It localises to the secreted. Its function is as follows. Extracellular aminopeptidase that allows assimilation of proteinaceous substrates. This chain is Leucine aminopeptidase 1 (lap1), found in Pyrenophora tritici-repentis (strain Pt-1C-BFP) (Wheat tan spot fungus).